The sequence spans 151 residues: Deoxyuridine 5'-triphosphate nucleotidohydrolase (151 aa).

Residues 70–72, Asn83, 87–89, and Met97 each bind substrate; these read RSG and LID.

The protein belongs to the dUTPase family. Requires Mg(2+) as cofactor.

It catalyses the reaction dUTP + H2O = dUMP + diphosphate + H(+). It functions in the pathway pyrimidine metabolism; dUMP biosynthesis; dUMP from dCTP (dUTP route): step 2/2. Its function is as follows. This enzyme is involved in nucleotide metabolism: it produces dUMP, the immediate precursor of thymidine nucleotides and it decreases the intracellular concentration of dUTP so that uracil cannot be incorporated into DNA. In Salmonella enteritidis PT4 (strain P125109), this protein is Deoxyuridine 5'-triphosphate nucleotidohydrolase.